Consider the following 382-residue polypeptide: MNGDKSTLSVIVAGGGTAGHIEPALAVADAIKAIDDTAVVTALGTARGLETTLVPERGYPLELVPPVPLPRKPTLDLLRLPGRVRASVRRTREVLDATGADVVVGFGGYVALPAYLAAGPGLLRRRRRIPIVVHEANASAGIANKIGARRAARVLAAVAGSGVSARGRSDAEILGIPVRASITGLDRSALRAEARAHFGLPADGPVLLVFGGSQGARSLNEAVSGAAESLAAAGVAVLHAHGPKNTLDVPAAPGGPPYVAVPYLSRMDLAYSAADAVICRSGAMTVAEVSAVGLPAVYVPLPHGNGEQELNARPVVAAGGGMIVADGDLSAGFVAETVIPLLRDPAQLEDMGRRAAGAGHRSAAAEVARIVIDVAAQTRGTR.

UDP-N-acetyl-alpha-D-glucosamine contacts are provided by residues 17-19 (TAG), asparagine 137, arginine 179, serine 213, and glutamine 308.

This sequence belongs to the glycosyltransferase 28 family. MurG subfamily.

It is found in the cell membrane. It catalyses the reaction di-trans,octa-cis-undecaprenyl diphospho-N-acetyl-alpha-D-muramoyl-L-alanyl-D-glutamyl-meso-2,6-diaminopimeloyl-D-alanyl-D-alanine + UDP-N-acetyl-alpha-D-glucosamine = di-trans,octa-cis-undecaprenyl diphospho-[N-acetyl-alpha-D-glucosaminyl-(1-&gt;4)]-N-acetyl-alpha-D-muramoyl-L-alanyl-D-glutamyl-meso-2,6-diaminopimeloyl-D-alanyl-D-alanine + UDP + H(+). The protein operates within cell wall biogenesis; peptidoglycan biosynthesis. Cell wall formation. Catalyzes the transfer of a GlcNAc subunit on undecaprenyl-pyrophosphoryl-MurNAc-pentapeptide (lipid intermediate I) to form undecaprenyl-pyrophosphoryl-MurNAc-(pentapeptide)GlcNAc (lipid intermediate II). In Rhodococcus opacus (strain B4), this protein is UDP-N-acetylglucosamine--N-acetylmuramyl-(pentapeptide) pyrophosphoryl-undecaprenol N-acetylglucosamine transferase.